A 603-amino-acid chain; its full sequence is Mono(2-hydroxyethyl) terephthalate hydrolase (603 aa).

The signal sequence occupies residues 1–17 (MQTTVTTMLLASVALAA). C18 carries N-palmitoyl cysteine lipidation. A lipid anchor (S-diacylglycerol cysteine) is attached at C18. The tract at residues 24-44 (TPLPLPQQQPPQQEPPPPPVP) is disordered. Positions 26-44 (LPLPQQQPPQQEPPPPPVP) are enriched in pro residues. C51 and C92 are disulfide-bonded. G132 provides a ligand contact to 4-[(2-hydroxyethoxy)carbonyl]benzoate. 4 disulfides stabilise this stretch: C224/C529, C303/C320, C340/C348, and C577/C599. S225 serves as the catalytic Acyl-ester intermediate. E226 lines the 4-[(2-hydroxyethoxy)carbonyl]benzoate pocket. Ca(2+) is bound by residues D304, D307, L309, D311, and I313. Positions 411 and 416 each coordinate 4-[(2-hydroxyethoxy)carbonyl]benzoate. Active-site charge relay system residues include D492 and H528. H528 provides a ligand contact to 4-[(2-hydroxyethoxy)carbonyl]benzoate.

The protein belongs to the tannase family.

It is found in the cell outer membrane. The catalysed reaction is 4-[(2-hydroxyethoxy)carbonyl]benzoate + H2O = terephthalate + ethylene glycol + H(+). Involved in the degradation and assimilation of the plastic poly(ethylene terephthalate) (PET), which allows I.sakaiensis to use PET as its major energy and carbon source for growth. Likely acts synergistically with PETase to depolymerize PET. Catalyzes the hydrolysis of mono(2-hydroxyethyl) terephthalate (MHET) into its two environmentally benign monomers, terephthalate and ethylene glycol. Does not show activity against PET, bis(hydroxyethyl) terephthalate (BHET), pNP-aliphatic esters or typical aromatic ester compounds catalyzed by the tannase family enzymes, such as ethyl gallate and ethyl ferulate. The chain is Mono(2-hydroxyethyl) terephthalate hydrolase from Piscinibacter sakaiensis (Ideonella sakaiensis).